Here is a 408-residue protein sequence, read N- to C-terminus: Acetylornithine/succinyldiaminopimelate aminotransferase (408 aa).

Pyridoxal 5'-phosphate is bound by residues Gly-108–Ala-109 and Phe-141. Arg-144 contributes to the N(2)-acetyl-L-ornithine binding site. Position 226–229 (Asp-226–Gln-229) interacts with pyridoxal 5'-phosphate. Residue Lys-255 is modified to N6-(pyridoxal phosphate)lysine. Thr-283 serves as a coordination point for N(2)-acetyl-L-ornithine. Thr-284 is a binding site for pyridoxal 5'-phosphate.

This sequence belongs to the class-III pyridoxal-phosphate-dependent aminotransferase family. ArgD subfamily. In terms of assembly, homodimer. It depends on pyridoxal 5'-phosphate as a cofactor.

The protein localises to the cytoplasm. The enzyme catalyses N(2)-acetyl-L-ornithine + 2-oxoglutarate = N-acetyl-L-glutamate 5-semialdehyde + L-glutamate. The catalysed reaction is N-succinyl-(2S,6S)-2,6-diaminopimelate + 2-oxoglutarate = (S)-2-succinylamino-6-oxoheptanedioate + L-glutamate. It participates in amino-acid biosynthesis; L-arginine biosynthesis; N(2)-acetyl-L-ornithine from L-glutamate: step 4/4. It functions in the pathway amino-acid biosynthesis; L-lysine biosynthesis via DAP pathway; LL-2,6-diaminopimelate from (S)-tetrahydrodipicolinate (succinylase route): step 2/3. Its function is as follows. Involved in both the arginine and lysine biosynthetic pathways. This is Acetylornithine/succinyldiaminopimelate aminotransferase from Buchnera aphidicola subsp. Acyrthosiphon pisum (strain APS) (Acyrthosiphon pisum symbiotic bacterium).